The sequence spans 264 residues: Thiazole synthase (264 aa).

The active-site Schiff-base intermediate with DXP is Lys-106. 1-deoxy-D-xylulose 5-phosphate is bound by residues Gly-167, 193-194 (AG), and 215-216 (NS).

The protein belongs to the ThiG family. In terms of assembly, homotetramer. Forms heterodimers with either ThiH or ThiS.

The protein resides in the cytoplasm. The catalysed reaction is [ThiS sulfur-carrier protein]-C-terminal-Gly-aminoethanethioate + 2-iminoacetate + 1-deoxy-D-xylulose 5-phosphate = [ThiS sulfur-carrier protein]-C-terminal Gly-Gly + 2-[(2R,5Z)-2-carboxy-4-methylthiazol-5(2H)-ylidene]ethyl phosphate + 2 H2O + H(+). Its pathway is cofactor biosynthesis; thiamine diphosphate biosynthesis. Functionally, catalyzes the rearrangement of 1-deoxy-D-xylulose 5-phosphate (DXP) to produce the thiazole phosphate moiety of thiamine. Sulfur is provided by the thiocarboxylate moiety of the carrier protein ThiS. In vitro, sulfur can be provided by H(2)S. The chain is Thiazole synthase from Prochlorococcus marinus (strain MIT 9215).